Consider the following 463-residue polypeptide: RuvB-like helicase 2 (463 aa).

ATP is bound at residue 76–83 (GPPSTGKT).

It belongs to the RuvB family. May form heterododecamers with RVB1. Component of the SWR1 chromatin remodeling complex, the INO80 chromatin remodeling complex, and of the R2TP complex.

The protein resides in the nucleus. It catalyses the reaction ATP + H2O = ADP + phosphate + H(+). In terms of biological role, DNA helicase which participates in several chromatin remodeling complexes, including the SWR1 and the INO80 complexes. The SWR1 complex mediates the ATP-dependent exchange of histone H2A for the H2A variant HZT1 leading to transcriptional regulation of selected genes by chromatin remodeling. The INO80 complex remodels chromatin by shifting nucleosomes and is involved in DNA repair. Also involved in pre-rRNA processing. The chain is RuvB-like helicase 2 (RVB2) from Cryptococcus neoformans var. neoformans serotype D (strain JEC21 / ATCC MYA-565) (Filobasidiella neoformans).